A 196-amino-acid polypeptide reads, in one-letter code: Molybdenum cofactor guanylyltransferase (196 aa).

GTP-binding positions include 14–16, Lys-27, Asp-73, and Asp-106; that span reads LAG. Mg(2+) is bound at residue Asp-106.

The protein belongs to the MobA family. As to quaternary structure, monomer. Requires Mg(2+) as cofactor.

Its subcellular location is the cytoplasm. The enzyme catalyses Mo-molybdopterin + GTP + H(+) = Mo-molybdopterin guanine dinucleotide + diphosphate. Functionally, transfers a GMP moiety from GTP to Mo-molybdopterin (Mo-MPT) cofactor (Moco or molybdenum cofactor) to form Mo-molybdopterin guanine dinucleotide (Mo-MGD) cofactor. This is Molybdenum cofactor guanylyltransferase from Acidiphilium cryptum (strain JF-5).